Consider the following 198-residue polypeptide: MAQKPKIDPHVGRLGYLQALVTEFQETESQDAKEQVLANLANFAYDPGNYQYLRQLQVLDLFLDSLSEENETLIKFAIGGLCNLCADKANKEHVLQAGGLPLIIGCLSSPDEETVLSAVTTLMYLSSPGSRSHPELTSLPVVQCMLRFSISASTRLRNLAQIFLEDFCSPSQVAEAHSQQAHSALGIPLPKTEAPQQP.

ARM repeat units follow at residues 57–99 (QVLD…QAGG) and 100–140 (LPLI…TSLP). The residue at position 169 (S169) is a Phosphoserine.

In terms of assembly, component of the minor spliceosome. Within this complex, interacts with RBM48.

Functionally, as a component of the minor spliceosome, involved in the splicing of U12-type introns in pre-mRNAs. The chain is Armadillo repeat-containing protein 7 (Armc7) from Mus musculus (Mouse).